The sequence spans 117 residues: uncharacterized protein (117 aa).

The N-terminal stretch at 1-24 (MMTEFGSAMTLVTGLVAYGAYVKS) is a signal peptide. The disordered stretch occupies residues 42–117 (EKENFNYNNN…NNQIKRRLFD (76 aa)). Over residues 46–95 (FNYNNNNNNNNNNNNNNSNNNDNNNNNNSNSNNNNNNNNNNNNNNNNNIN) the composition is skewed to low complexity. 2 N-linked (GlcNAc...) asparagine glycosylation sites follow: Asn61 and Asn72. Over residues 96 to 110 (DKQINGTNIFDSNNQ) the composition is skewed to polar residues.

The protein resides in the secreted. This is an uncharacterized protein from Dictyostelium discoideum (Social amoeba).